The primary structure comprises 427 residues: Glutamate-1-semialdehyde 2,1-aminomutase (427 aa).

Lysine 265 carries the post-translational modification N6-(pyridoxal phosphate)lysine.

Belongs to the class-III pyridoxal-phosphate-dependent aminotransferase family. HemL subfamily. As to quaternary structure, homodimer. Pyridoxal 5'-phosphate serves as cofactor.

The protein localises to the cytoplasm. It carries out the reaction (S)-4-amino-5-oxopentanoate = 5-aminolevulinate. Its pathway is porphyrin-containing compound metabolism; protoporphyrin-IX biosynthesis; 5-aminolevulinate from L-glutamyl-tRNA(Glu): step 2/2. In Bordetella parapertussis (strain 12822 / ATCC BAA-587 / NCTC 13253), this protein is Glutamate-1-semialdehyde 2,1-aminomutase.